Consider the following 440-residue polypeptide: Adenylosuccinate synthetase (440 aa).

GTP contacts are provided by residues 14–20 and 42–44; these read GDEGKGK and GHT. Asp-15 acts as the Proton acceptor in catalysis. Positions 15 and 42 each coordinate Mg(2+). Residues 15 to 18, 40 to 43, Thr-131, Arg-145, Gln-226, Thr-241, and Arg-313 contribute to the IMP site; these read DEGK and NAGH. His-43 acts as the Proton donor in catalysis. 309 to 315 is a binding site for substrate; that stretch reads ATTGRQR. Residues Arg-315, 341-343, and 423-425 each bind GTP; these read KLD and STG.

This sequence belongs to the adenylosuccinate synthetase family. Homodimer. It depends on Mg(2+) as a cofactor.

It localises to the cytoplasm. It carries out the reaction IMP + L-aspartate + GTP = N(6)-(1,2-dicarboxyethyl)-AMP + GDP + phosphate + 2 H(+). Its pathway is purine metabolism; AMP biosynthesis via de novo pathway; AMP from IMP: step 1/2. In terms of biological role, plays an important role in the de novo pathway of purine nucleotide biosynthesis. Catalyzes the first committed step in the biosynthesis of AMP from IMP. This is Adenylosuccinate synthetase from Hydrogenovibrio crunogenus (strain DSM 25203 / XCL-2) (Thiomicrospira crunogena).